Reading from the N-terminus, the 399-residue chain is MIIRPVDEVRGELNAPPSKSYTHRAYFLALLAEGESTIENPLVCDDTLATIEAIRSFGAGVDGKTVVPPEEPSPGFVYARESGTTARFSTALAGGIGGKTLIDGARRLRERPMDGLVKALKGLGAEVDGFSLPLTVKGPVKSGRVSVDASKSSQFVSGLLLLGAEVGLKVEARNPVSKPYIEMTLRTMEAFGVEFEREGFSFEVYPGVKGTRYKVPGDYSTASFFLAAGALYGKVRVNNLLREDVQADMAFLDALEEFGARVKRGRDYVKVEGGELKAVALDCSDFPDSFPILAVVAAYAEGRSVIRARQLRFKESDRVRAMAVNLSRMGVKVRELEDGLEIEGGRPRGAKVETFNDHRIAMAMSIAALGATGPSIIEDTESVSKSHPGFFDDLRRLLE.

3-phosphoshikimate is bound by residues Lys19, Ser20, and Arg24. Lys19 contributes to the phosphoenolpyruvate binding site. Residues Gly83 and Arg111 each coordinate phosphoenolpyruvate. The 3-phosphoshikimate site is built by Ser152, Ser153, Gln154, Asp288, Gln310, and Lys314. Gln154 serves as a coordination point for phosphoenolpyruvate. Asp288 acts as the Proton acceptor in catalysis. Arg318, Arg359, and Lys385 together coordinate phosphoenolpyruvate.

Belongs to the EPSP synthase family. Monomer.

It localises to the cytoplasm. The enzyme catalyses 3-phosphoshikimate + phosphoenolpyruvate = 5-O-(1-carboxyvinyl)-3-phosphoshikimate + phosphate. It functions in the pathway metabolic intermediate biosynthesis; chorismate biosynthesis. In terms of biological role, catalyzes the transfer of the enolpyruvyl moiety of phosphoenolpyruvate (PEP) to the 5-hydroxyl of shikimate-3-phosphate (S3P) to produce enolpyruvyl shikimate-3-phosphate and inorganic phosphate. This is 3-phosphoshikimate 1-carboxyvinyltransferase from Thermococcus kodakarensis (strain ATCC BAA-918 / JCM 12380 / KOD1) (Pyrococcus kodakaraensis (strain KOD1)).